A 227-amino-acid chain; its full sequence is Ribose-5-phosphate isomerase A (227 aa).

Residues 26–29, 82–85, and 95–98 each bind substrate; these read TGST, DGAD, and KGGG. Glu-104 serves as the catalytic Proton acceptor. Position 122 (Lys-122) interacts with substrate.

It belongs to the ribose 5-phosphate isomerase family. Homodimer.

It carries out the reaction aldehydo-D-ribose 5-phosphate = D-ribulose 5-phosphate. Its pathway is carbohydrate degradation; pentose phosphate pathway; D-ribose 5-phosphate from D-ribulose 5-phosphate (non-oxidative stage): step 1/1. Functionally, catalyzes the reversible conversion of ribose-5-phosphate to ribulose 5-phosphate. This is Ribose-5-phosphate isomerase A from Streptococcus pneumoniae (strain ATCC 700669 / Spain 23F-1).